The chain runs to 388 residues: Pre-mRNA-splicing factor cwf2 (388 aa).

The disordered stretch occupies residues 43-63; sequence VKRKKQPARKQIETRPEYEME. The segment at 111–138 adopts a C3H1-type zinc-finger fold; sequence NPGSFFCLYFARGMCSEGSKCEYLHRLP. Residues 174 to 248 form the RRM domain; the sequence is YTLYVGGITP…ECLNVRWATT (75 aa). Residues 331 to 352 form a disordered region; that stretch reads PNKSQSEEGSNDDHKSVTTTES.

This sequence belongs to the RRM CWC2 family. In terms of assembly, belongs to the 40S cdc5-associated complex (or cwf complex), a spliceosome sub-complex reminiscent of a late-stage spliceosome composed of the U2, U5 and U6 snRNAs and at least brr2, cdc5, cwf2/prp3, cwf3/syf1, cwf4/syf3, cwf5/ecm2, spp42/cwf6, cwf7/spf27, cwf8, cwf9, cwf10, cwf11, cwf12, prp45/cwf13, cwf14, cwf15, cwf16, cwf17, cwf18, cwf19, cwf20, cwf21, cwf22, cwf23, cwf24, cwf25, cwf26, cyp7/cwf27, cwf28, cwf29/ist3, lea1, msl1, prp5/cwf1, prp10, prp12/sap130, prp17, prp22, sap61, sap62, sap114, sap145, slu7, smb1, smd1, smd3, smf1, smg1 and syf2.

It is found in the nucleus. Its function is as follows. Involved in the first step of pre-mRNA splicing. Required for cell growth and cell cycle control. Plays a role in the levels of the U1, U4, U5 and U6 snRNAs and the maintenance of the U4/U6 snRNA complex. May provide the link between the 'nineteen complex' NTC spliceosome protein complex and the spliceosome through the U6 snRNA. Associates predominantly with U6 snRNAs in assembled active spliceosomes. Binds directly to the internal stem-loop (ISL) domain of the U6 snRNA and to the pre-mRNA intron near the 5' splice site during the activation and catalytic phases of the spliceosome cycle. Involved in pre-mRNA splicing. The protein is Pre-mRNA-splicing factor cwf2 (cwf2) of Schizosaccharomyces pombe (strain 972 / ATCC 24843) (Fission yeast).